The sequence spans 347 residues: Methionine import ATP-binding protein MetN (347 aa).

The region spanning 2–241 (IKLEGVSKTY…PATRLGRDFL (240 aa)) is the ABC transporter domain. An ATP-binding site is contributed by 38–45 (GLSGAGKS).

This sequence belongs to the ABC transporter superfamily. Methionine importer (TC 3.A.1.24) family. In terms of assembly, the complex is composed of two ATP-binding proteins (MetN), two transmembrane proteins (MetI) and a solute-binding protein (MetQ).

It localises to the cell inner membrane. It carries out the reaction L-methionine(out) + ATP + H2O = L-methionine(in) + ADP + phosphate + H(+). The enzyme catalyses D-methionine(out) + ATP + H2O = D-methionine(in) + ADP + phosphate + H(+). In terms of biological role, part of the ABC transporter complex MetNIQ involved in methionine import. Responsible for energy coupling to the transport system. This chain is Methionine import ATP-binding protein MetN, found in Chromohalobacter salexigens (strain ATCC BAA-138 / DSM 3043 / CIP 106854 / NCIMB 13768 / 1H11).